Consider the following 500-residue polypeptide: uncharacterized protein (500 aa).

This is an uncharacterized protein from Halorubrum sp. PV6 (HRPV-1).